Consider the following 803-residue polypeptide: Protein AMEIOTIC 1 homolog (803 aa).

Disordered stretches follow at residues 21–64 (RPQV…QSLS) and 264–333 (RLRQ…RWSA). A compositionally biased stretch (basic and acidic residues) spans 39 to 50 (NGKDDANHDESK). A compositionally biased stretch (polar residues) spans 51-64 (NQSPGLPLSRQSLS). Residues 283–295 (KREEAESSMDKSR) show a composition bias toward basic and acidic residues. Over residues 296 to 313 (AARKKKAKTYKSPKKVEK) the composition is skewed to basic residues. Residues 314-333 (RRVVEAKDGDPRRGKDRWSA) are compositionally biased toward basic and acidic residues. A coiled-coil region spans residues 450-567 (VKKKVEELAE…SSFLSLKEQL (118 aa)). A disordered region spans residues 651 to 688 (ISGGGSSSCPVASGPEQLPRSSSCPSIGPGGLPPSSRA).

Its subcellular location is the nucleus. The protein localises to the chromosome. Functionally, plays a fundamental role in building the proper chromosome structure at the beginning of meiosis in male meiocytes. Required for the transition from leptotene to zygotene in meiocytes. Required for homologous chromosome pairing. This Oryza sativa subsp. japonica (Rice) protein is Protein AMEIOTIC 1 homolog.